Reading from the N-terminus, the 316-residue chain is Probable cell division protein WhiA (316 aa).

Positions 275–309 (TLKELGEMVSGGKISKSGINHRLRKIDDIAEKLRA) form a DNA-binding region, H-T-H motif.

Belongs to the WhiA family.

In terms of biological role, involved in cell division and chromosome segregation. The chain is Probable cell division protein WhiA from Bacillus anthracis (strain CDC 684 / NRRL 3495).